The sequence spans 509 residues: Maturase K (509 aa).

This sequence belongs to the intron maturase 2 family. MatK subfamily.

Its subcellular location is the plastid. The protein localises to the chloroplast. Its function is as follows. Usually encoded in the trnK tRNA gene intron. Probably assists in splicing its own and other chloroplast group II introns. The polypeptide is Maturase K (Opuntia quimilo (Cactus)).